Consider the following 324-residue polypeptide: Calmodulin-like protein 12 (324 aa).

6 consecutive EF-hand domains span residues 8 to 43 (DQIT…IGEK), 44 to 79 (PTKA…NQGH), 97 to 132 (DQIT…LGKN), 133 to 168 (RTKA…NQGH), 187 to 222 (DQIL…LGET), and 223 to 258 (QTKA…KMID). 30 residues coordinate Ca(2+): Asp21, Asn23, Asp25, Ser27, Glu32, Asp57, Asp59, Asp61, Thr63, Glu68, Asp110, Asn112, Asp114, Ser116, Glu121, Asp146, Asp148, Asp150, Thr152, Glu157, Asp200, Asn202, Asp204, Tyr206, Glu211, Asp236, Asp238, Asp240, Thr242, and Glu247.

Belongs to the calmodulin family. As to quaternary structure, interacts with PID. Binds to ABCG36.

In terms of biological role, potential calcium sensor that binds calcium in vitro. The sequence is that of Calmodulin-like protein 12 from Arabidopsis thaliana (Mouse-ear cress).